The following is a 134-amino-acid chain: Cytochrome b (134 aa).

3 helical membrane passes run 33–53 (FGSL…FLAM), 77–98 (WLIR…FLHV), and 113–133 (WNIG…GYVL). His83 and His97 together coordinate heme b.

It belongs to the cytochrome b family. As to quaternary structure, the cytochrome bc1 complex contains 11 subunits: 3 respiratory subunits (MT-CYB, CYC1 and UQCRFS1), 2 core proteins (UQCRC1 and UQCRC2) and 6 low-molecular weight proteins (UQCRH/QCR6, UQCRB/QCR7, UQCRQ/QCR8, UQCR10/QCR9, UQCR11/QCR10 and a cleavage product of UQCRFS1). This cytochrome bc1 complex then forms a dimer. It depends on heme b as a cofactor.

Its subcellular location is the mitochondrion inner membrane. In terms of biological role, component of the ubiquinol-cytochrome c reductase complex (complex III or cytochrome b-c1 complex) that is part of the mitochondrial respiratory chain. The b-c1 complex mediates electron transfer from ubiquinol to cytochrome c. Contributes to the generation of a proton gradient across the mitochondrial membrane that is then used for ATP synthesis. The protein is Cytochrome b (MT-CYB) of Sorex shinto sadonis (Sado shrew).